The sequence spans 227 residues: ATP synthase subunit a (227 aa).

6 helical membrane passes run 14-34 (LLNI…FVSF), 69-89 (WVVL…IGLF), 98-118 (QLSM…VYGF), 137-157 (LLVP…PLAL), 169-189 (HLLM…SVML), and 205-223 (IAVA…TLYL).

This sequence belongs to the ATPase A chain family. In terms of assembly, F-type ATPases have 2 components, CF(1) - the catalytic core - and CF(0) - the membrane proton channel. CF(1) has five subunits: alpha(3), beta(3), gamma(1), delta(1), epsilon(1). CF(0) has three main subunits: a, b and c.

It localises to the mitochondrion inner membrane. Its function is as follows. Mitochondrial membrane ATP synthase (F(1)F(0) ATP synthase or Complex V) produces ATP from ADP in the presence of a proton gradient across the membrane which is generated by electron transport complexes of the respiratory chain. F-type ATPases consist of two structural domains, F(1) - containing the extramembraneous catalytic core and F(0) - containing the membrane proton channel, linked together by a central stalk and a peripheral stalk. During catalysis, ATP synthesis in the catalytic domain of F(1) is coupled via a rotary mechanism of the central stalk subunits to proton translocation. Key component of the proton channel; it may play a direct role in the translocation of protons across the membrane. The polypeptide is ATP synthase subunit a (ATP6) (Branchiostoma floridae (Florida lancelet)).